The chain runs to 376 residues: Respiration factor 1 (376 aa).

Disordered regions lie at residues 1 to 23, 88 to 107, 258 to 279, and 347 to 376; these read MKDLNPEMGKFATTKGPPQDNRG, VNVTHDESLPLGTIESNSTK, FKEKKKKKKGDVNGNHPETGSS, and GVNELEHNSSNLNNSNSGTPHNHNQNQHTN. Over residues 354 to 376 the composition is skewed to low complexity; it reads NSSNLNNSNSGTPHNHNQNQHTN.

The protein localises to the cytoplasm. Its subcellular location is the nucleus. It localises to the mitochondrion. Functionally, mitochondrial and nuclear transcriptional activator required for respiratory growth. The protein is Respiration factor 1 (RSF1) of Saccharomyces cerevisiae (strain YJM789) (Baker's yeast).